The chain runs to 395 residues: Obg-like ATPase 1 (395 aa).

The OBG-type G domain maps to Leu-22–Leu-280. Asn-31–Thr-36 contacts ATP. Positions 35 and 55 each coordinate Mg(2+). Leu-228 provides a ligand contact to ATP. The TGS domain maps to Gln-301 to Phe-384.

The protein belongs to the TRAFAC class OBG-HflX-like GTPase superfamily. OBG GTPase family. YchF/OLA1 subfamily. Monomer. The cofactor is Mg(2+). Expressed in the nervous system, pharyngeal muscles and intestine (at protein level).

Its subcellular location is the cytoplasm. In terms of biological role, hydrolyzes ATP, and can also hydrolyze GTP with lower efficiency. Has lower affinity for GTP. Plays a role in regulating starvation-induced thermotaxis responses in AFD thermosensory neurons. The sequence is that of Obg-like ATPase 1 from Caenorhabditis elegans.